A 150-amino-acid chain; its full sequence is uncharacterized protein (150 aa).

This sequence belongs to the IIV-6 391R family.

This is an uncharacterized protein from Invertebrate iridescent virus 3 (IIV-3).